The primary structure comprises 1214 residues: Formin-D (1214 aa).

The GBD/FH3 domain maps to 10-379; the sequence is KKEESPQSID…KMNNGESYLD (370 aa). Residues 401–448 are a coiled coil; it reads SGEKAVLIQKEIEDLKKQKKRDQDKLAEKDKLLTKLAKRMRKMEEAIK. The FH1 domain occupies 457–544; the sequence is NNQIEIESPP…GSGDGIPLPP (88 aa). Composition is skewed to polar residues over residues 462 to 479 and 518 to 534; these read IESP…TTPG and LDTT…QTEA. 6 disordered regions span residues 462-490, 507-569, 868-948, 1026-1045, 1054-1089, and 1133-1214; these read IESP…TSPV, APNG…SRPP, PKSV…PLKD, DKST…IKKS, LKKI…DDED, and MNLQ…EGEN. Residues 541-554 are compositionally biased toward pro residues; it reads PLPPGAPPPPPPPG. One can recognise an FH2 domain in the interval 562-1037; the sequence is PQLCSRPPSI…STQRKNEKER (476 aa). The span at 868–877 shows a compositional bias: basic and acidic residues; that stretch reads PKSVEPKPDD. Over residues 930–940 the composition is skewed to polar residues; sequence QVNTNSTSDSK. The stretch at 1019–1056 forms a coiled coil; it reads EIEKSIKDKSTQRKNEKERKEMEIKKSKLEMIHSKLKK. A compositionally biased stretch (polar residues) spans 1059-1071; the sequence is SPSSSNRILASNE. The region spanning 1065–1095 is the DAD domain; sequence RILASNESSPTSSTSSVVHQHDDEDEETIKE. Low complexity predominate over residues 1161–1171; that stretch reads SSTYSSISSIY. A compositionally biased stretch (acidic residues) spans 1174–1214; that stretch reads EPLDMSDQEDEDEEEEEDEEEEEEEEEGDDDNDNDEEEGEN. A coiled-coil region spans residues 1176 to 1207; that stretch reads LDMSDQEDEDEEEEEDEEEEEEEEEGDDDNDN.

Belongs to the formin homology family. Diaphanous subfamily. As to quaternary structure, interacts (via GBD/FH3 domain) with activated Rho-GTPases.

In terms of biological role, formins play an important role in the nucleation of actin and the formation of linear actin filaments. The chain is Formin-D (forD) from Dictyostelium discoideum (Social amoeba).